The primary structure comprises 274 residues: MAVIKMKPTSPGRRGVVKISRDHLYKGEPFAPLLEPQFQHAGRNNNGHITTRHKGGGHKHHYRVVDFLRTKDGIPAKVERIEYDPNRSAHIALVCYADGERRYIIAPRGLEVGASIMSGAEAPIRVGNTLPIRNIPVGSIVHCIELQIGKGAQIVRSAGTSATLLAREGIYAQVRMRSGEVRKIHIECRATLGQVANEEHSLRRLGKAGAKRWKGIRPTVRGVVMNPVDHPHGGGEGKTGEGRHPVDPWGNLTKGYRTRNNKRTQVMIVSRRKK.

The interval 223–256 is disordered; that stretch reads VVMNPVDHPHGGGEGKTGEGRHPVDPWGNLTKGY. The segment covering 229 to 246 has biased composition (basic and acidic residues); it reads DHPHGGGEGKTGEGRHPV.

This sequence belongs to the universal ribosomal protein uL2 family. As to quaternary structure, part of the 50S ribosomal subunit. Forms a bridge to the 30S subunit in the 70S ribosome.

In terms of biological role, one of the primary rRNA binding proteins. Required for association of the 30S and 50S subunits to form the 70S ribosome, for tRNA binding and peptide bond formation. It has been suggested to have peptidyltransferase activity; this is somewhat controversial. Makes several contacts with the 16S rRNA in the 70S ribosome. The polypeptide is Large ribosomal subunit protein uL2 (Albidiferax ferrireducens (strain ATCC BAA-621 / DSM 15236 / T118) (Rhodoferax ferrireducens)).